The primary structure comprises 138 residues: Ribulose bisphosphate carboxylase small subunit (138 aa).

It belongs to the RuBisCO small chain family. Heterohexadecamer of 8 large and 8 small subunits.

Its subcellular location is the plastid. The protein localises to the chloroplast. Functionally, ruBisCO catalyzes two reactions: the carboxylation of D-ribulose 1,5-bisphosphate, the primary event in carbon dioxide fixation, as well as the oxidative fragmentation of the pentose substrate in the photorespiration process. Both reactions occur simultaneously and in competition at the same active site. Although the small subunit is not catalytic it is essential for maximal activity. This is Ribulose bisphosphate carboxylase small subunit from Cyanidium caldarium (Red alga).